The following is a 565-amino-acid chain: NAD-dependent malic enzyme (565 aa).

The active-site Proton donor is tyrosine 104. Arginine 157 contacts NAD(+). Lysine 175 acts as the Proton acceptor in catalysis. A divalent metal cation-binding residues include glutamate 246, aspartate 247, and aspartate 270. NAD(+) contacts are provided by aspartate 270 and asparagine 418.

Belongs to the malic enzymes family. As to quaternary structure, homotetramer. Requires Mg(2+) as cofactor. Mn(2+) serves as cofactor.

The catalysed reaction is (S)-malate + NAD(+) = pyruvate + CO2 + NADH. The enzyme catalyses oxaloacetate + H(+) = pyruvate + CO2. This chain is NAD-dependent malic enzyme, found in Klebsiella pneumoniae subsp. pneumoniae (strain ATCC 700721 / MGH 78578).